The sequence spans 510 residues: Light-independent protochlorophyllide reductase subunit B (510 aa).

Aspartate 36 provides a ligand contact to [4Fe-4S] cluster. Aspartate 296 functions as the Proton donor in the catalytic mechanism. 431 to 432 (GM) is a binding site for substrate.

It belongs to the ChlB/BchB/BchZ family. As to quaternary structure, protochlorophyllide reductase is composed of three subunits; ChlL, ChlN and ChlB. Forms a heterotetramer of two ChlB and two ChlN subunits. [4Fe-4S] cluster serves as cofactor.

Its subcellular location is the plastid. It is found in the chloroplast. The enzyme catalyses chlorophyllide a + oxidized 2[4Fe-4S]-[ferredoxin] + 2 ADP + 2 phosphate = protochlorophyllide a + reduced 2[4Fe-4S]-[ferredoxin] + 2 ATP + 2 H2O. The protein operates within porphyrin-containing compound metabolism; chlorophyll biosynthesis (light-independent). Component of the dark-operative protochlorophyllide reductase (DPOR) that uses Mg-ATP and reduced ferredoxin to reduce ring D of protochlorophyllide (Pchlide) to form chlorophyllide a (Chlide). This reaction is light-independent. The NB-protein (ChlN-ChlB) is the catalytic component of the complex. The chain is Light-independent protochlorophyllide reductase subunit B from Stigeoclonium helveticum (Green alga).